A 259-amino-acid chain; its full sequence is Type III pantothenate kinase (259 aa).

Residue 6 to 13 participates in ATP binding; the sequence is DVGNTNCT. Residue 107-110 participates in substrate binding; sequence GSDR. Asp-109 functions as the Proton acceptor in the catalytic mechanism. Asp-129 contacts K(+). Residue Thr-132 coordinates ATP. Substrate is bound at residue Thr-184.

It belongs to the type III pantothenate kinase family. Homodimer. NH4(+) is required as a cofactor. Requires K(+) as cofactor.

The protein localises to the cytoplasm. The catalysed reaction is (R)-pantothenate + ATP = (R)-4'-phosphopantothenate + ADP + H(+). The protein operates within cofactor biosynthesis; coenzyme A biosynthesis; CoA from (R)-pantothenate: step 1/5. Functionally, catalyzes the phosphorylation of pantothenate (Pan), the first step in CoA biosynthesis. In Listeria monocytogenes serotype 4b (strain CLIP80459), this protein is Type III pantothenate kinase.